The primary structure comprises 766 residues: Single-minded homolog 1 (766 aa).

Residues 1-53 (MKEKSKNAARTRREKENSEFYELAKLLPLPSAITSQLDKASIIRLTTSYLKMR) form the bHLH domain. PAS domains follow at residues 77-147 (GREL…QPYH) and 218-288 (PPSA…LVKG). The 44-residue stretch at 292–335 (TKYYRFLAKHGGWVWVQSYATIVHNSRSSRPHCIVSVNYVLTDT) folds into the PAC domain. Residues 336 to 766 (EYKGLQLSLD…GTSVIITNGS (431 aa)) form the Single-minded C-terminal domain. The span at 353-365 (AFSYTSSSTPTMT) shows a compositional bias: polar residues. Disordered stretches follow at residues 353–431 (AFSY…SQHD) and 528–563 (WDEDSVVSSPDPGSASESGDRYRTEQYQSSPHEPSK). Positions 368 to 387 (RKGAKSRLSSSKSKSRTSPY) match the Nuclear localization signal motif. Low complexity predominate over residues 373–385 (SRLSSSKSKSRTS). A compositionally biased stretch (basic and acidic residues) spans 394 to 404 (HTERSESDHDS).

Efficient DNA binding requires dimerization with another bHLH protein. Heterodimer; forms a heterodimer with ARNT, ARNT2.

It localises to the nucleus. Transcriptional factor that may have pleiotropic effects during embryogenesis and in the adult. The sequence is that of Single-minded homolog 1 (SIM1) from Homo sapiens (Human).